We begin with the raw amino-acid sequence, 126 residues long: Profilin-3 (126 aa).

This sequence belongs to the profilin family. In terms of assembly, occurs in many kinds of cells as a complex with monomeric actin in a 1:1 ratio. As to expression, in embryos, expression is specifically detected in body wall muscle cells. In adults, expression is localized to a striking dot-like fashion in body wall muscle.

Its subcellular location is the cytoplasm. It localises to the cytoskeleton. Its function is as follows. Binds to actin and affects the structure of the cytoskeleton. At high concentrations, profilin prevents the polymerization of actin, whereas it enhances it at low concentrations. By binding to PIP2, it inhibits the formation of IP3 and DG. Also binds to poly(L-proline) and phosphatidylinositol 4,5-bisphosphate micelles. This chain is Profilin-3 (pfn-3), found in Caenorhabditis elegans.